A 103-amino-acid chain; its full sequence is Phosphoribosyl-ATP pyrophosphatase (103 aa).

Belongs to the PRA-PH family.

The protein localises to the cytoplasm. The catalysed reaction is 1-(5-phospho-beta-D-ribosyl)-ATP + H2O = 1-(5-phospho-beta-D-ribosyl)-5'-AMP + diphosphate + H(+). It functions in the pathway amino-acid biosynthesis; L-histidine biosynthesis; L-histidine from 5-phospho-alpha-D-ribose 1-diphosphate: step 2/9. The polypeptide is Phosphoribosyl-ATP pyrophosphatase (Cereibacter sphaeroides (strain KD131 / KCTC 12085) (Rhodobacter sphaeroides)).